The sequence spans 235 residues: Putative N-acetylmannosamine-6-phosphate 2-epimerase (235 aa).

Belongs to the NanE family.

The enzyme catalyses an N-acyl-D-glucosamine 6-phosphate = an N-acyl-D-mannosamine 6-phosphate. Its pathway is amino-sugar metabolism; N-acetylneuraminate degradation; D-fructose 6-phosphate from N-acetylneuraminate: step 3/5. Converts N-acetylmannosamine-6-phosphate (ManNAc-6-P) to N-acetylglucosamine-6-phosphate (GlcNAc-6-P). The polypeptide is Putative N-acetylmannosamine-6-phosphate 2-epimerase (Edwardsiella ictaluri (strain 93-146)).